The chain runs to 555 residues: MTHLSDLDIANQSTLQPIKDIAASVGISEDALEPYGHYKAKIDINKITPRENKGKVVLVTAMSPTPAGEGKSTVTVGLADAFHELNKNVMVALREPALGPTFGIKGGATGGGYAQVLPMEDINLHFNGDFHAITTANNALSAFIDNHIHQGNELGIDQRRIEWKRVLDMNDRALRHVNVGLGGPTNGVPREDGFNITVASEIMAILCLSRSIKDLKDKISRITIGYTRDRKPVTVADLKVQGALAMILKDAIKPNLVQSIEGTPALVHGGPFANIAHGCNSILATETARDLADIVVTEAGFGSDLGAEKFMDIKAREAGFDPAAVVVVATIRALKMHGGVAKDNLKEENVEAVKAGIVNLERHVNNIKKFGVEPVVAINAFIHDTDAEVEYVKSWAKENNVRIALTEVWEKGGKGGVDLANEVLEVIDQPNSFKPLYELELPLEQKIEKIVTEIYGGSKVTFSSKAQKQLKQFKENGWDNYPVCMAKTQYSFSDDQTLLGAPSGFEITIRELEAKTGAGFIVALTGAIMTMPGLPKKPAALNMDVTDDGHAIGLF.

65–72 (TPAGEGKS) is a binding site for ATP.

The protein belongs to the formate--tetrahydrofolate ligase family.

The enzyme catalyses (6S)-5,6,7,8-tetrahydrofolate + formate + ATP = (6R)-10-formyltetrahydrofolate + ADP + phosphate. It participates in one-carbon metabolism; tetrahydrofolate interconversion. The chain is Formate--tetrahydrofolate ligase from Staphylococcus aureus (strain MRSA252).